The following is a 455-amino-acid chain: Kynurenine 3-monooxygenase (455 aa).

Belongs to the aromatic-ring hydroxylase family. KMO subfamily. FAD is required as a cofactor.

The enzyme catalyses L-kynurenine + NADPH + O2 + H(+) = 3-hydroxy-L-kynurenine + NADP(+) + H2O. Its pathway is cofactor biosynthesis; NAD(+) biosynthesis; quinolinate from L-kynurenine: step 1/3. In terms of biological role, catalyzes the hydroxylation of L-kynurenine (L-Kyn) to form 3-hydroxy-L-kynurenine (L-3OHKyn). Required for synthesis of quinolinic acid. The protein is Kynurenine 3-monooxygenase of Xanthomonas oryzae pv. oryzae (strain MAFF 311018).